A 444-amino-acid chain; its full sequence is Phosphoglucosamine mutase (444 aa).

Catalysis depends on S102, which acts as the Phosphoserine intermediate. Mg(2+)-binding residues include S102, D241, D243, and D245. Residue S102 is modified to Phosphoserine.

It belongs to the phosphohexose mutase family. Requires Mg(2+) as cofactor. In terms of processing, activated by phosphorylation.

The enzyme catalyses alpha-D-glucosamine 1-phosphate = D-glucosamine 6-phosphate. Its function is as follows. Catalyzes the conversion of glucosamine-6-phosphate to glucosamine-1-phosphate. This is Phosphoglucosamine mutase from Buchnera aphidicola subsp. Acyrthosiphon pisum (strain 5A).